A 387-amino-acid chain; its full sequence is 3-ketoacyl-CoA thiolase (387 aa).

Residue cysteine 91 is the Acyl-thioester intermediate of the active site. Catalysis depends on proton acceptor residues histidine 343 and cysteine 373.

It belongs to the thiolase-like superfamily. Thiolase family. Heterotetramer of two alpha chains (FadB) and two beta chains (FadA).

It localises to the cytoplasm. It catalyses the reaction an acyl-CoA + acetyl-CoA = a 3-oxoacyl-CoA + CoA. It functions in the pathway lipid metabolism; fatty acid beta-oxidation. Functionally, catalyzes the final step of fatty acid oxidation in which acetyl-CoA is released and the CoA ester of a fatty acid two carbons shorter is formed. Involved in the aerobic and anaerobic degradation of long-chain fatty acids. This chain is 3-ketoacyl-CoA thiolase, found in Escherichia coli O6:H1 (strain CFT073 / ATCC 700928 / UPEC).